The sequence spans 340 residues: Phosphoribosylformylglycinamidine cyclo-ligase (340 aa).

The protein belongs to the AIR synthase family.

It localises to the cytoplasm. The catalysed reaction is 2-formamido-N(1)-(5-O-phospho-beta-D-ribosyl)acetamidine + ATP = 5-amino-1-(5-phospho-beta-D-ribosyl)imidazole + ADP + phosphate + H(+). It participates in purine metabolism; IMP biosynthesis via de novo pathway; 5-amino-1-(5-phospho-D-ribosyl)imidazole from N(2)-formyl-N(1)-(5-phospho-D-ribosyl)glycinamide: step 2/2. In Streptococcus pneumoniae serotype 2 (strain D39 / NCTC 7466), this protein is Phosphoribosylformylglycinamidine cyclo-ligase.